The sequence spans 200 residues: Somatotropin (200 aa).

The signal sequence occupies residues 1–22; that stretch reads MARVLVVLSVVVASLFFSQGAT. Residue His38 participates in Zn(2+) binding. A disulfide bridge connects residues Cys71 and Cys173. A Zn(2+)-binding site is contributed by Glu182. The cysteines at positions 190 and 198 are disulfide-linked.

This sequence belongs to the somatotropin/prolactin family.

Its subcellular location is the secreted. Growth hormone plays an important role in growth control and is involved in the regulation of several anabolic processes. Implicated as an osmoregulatory substance important for seawater adaptation. The polypeptide is Somatotropin (gh) (Pangasianodon gigas (Mekong giant catfish)).